Reading from the N-terminus, the 435-residue chain is 5-methylthioadenosine/S-adenosylhomocysteine deaminase (435 aa).

Zn(2+) is bound by residues histidine 65 and histidine 67. Substrate contacts are provided by glutamate 94, arginine 150, and histidine 189. Histidine 216 is a binding site for Zn(2+). The substrate site is built by glutamate 219 and aspartate 304. Position 304 (aspartate 304) interacts with Zn(2+).

It belongs to the metallo-dependent hydrolases superfamily. MTA/SAH deaminase family. Zn(2+) is required as a cofactor.

It carries out the reaction S-adenosyl-L-homocysteine + H2O + H(+) = S-inosyl-L-homocysteine + NH4(+). The enzyme catalyses S-methyl-5'-thioadenosine + H2O + H(+) = S-methyl-5'-thioinosine + NH4(+). Catalyzes the deamination of 5-methylthioadenosine and S-adenosyl-L-homocysteine into 5-methylthioinosine and S-inosyl-L-homocysteine, respectively. Is also able to deaminate adenosine. This is 5-methylthioadenosine/S-adenosylhomocysteine deaminase from Bacillus cereus (strain ATCC 14579 / DSM 31 / CCUG 7414 / JCM 2152 / NBRC 15305 / NCIMB 9373 / NCTC 2599 / NRRL B-3711).